The primary structure comprises 312 residues: MDGDNQSENSQFLLLGISESPEQQQILFWMFLSMYLVTVLGNVLIILAISSDSRLHTPMYFFLANLSFTDLFFVTNTIPKMLVNLQSQNKAISYAGCLTQLYFLVSLVTLDNLILAVMAYDRYVAICCPLHYVTAMSPGLCVLLLSLCWGLSVFYGLLLTLLLTRVTFCGPREIHYLFCDMYILLRLACSNTHIIHTVLVATGCFIFLTPLGFMTTSYVRIVRTILQIPSASKKYKAFSTCASHLGVVSLFYGTLAMVYLQPLHTYSMKDSVATVMYAVVTPMMNPFIHSLRNKDMHGALGRVLRRLFQRPK.

Residues Met1–Gln25 are Extracellular-facing. An N-linked (GlcNAc...) asparagine glycan is attached at Asn5. The helical transmembrane segment at Ile26–Ile49 threads the bilayer. The Cytoplasmic portion of the chain corresponds to Ser50 to Thr57. A helical membrane pass occupies residues Pro58–Pro79. At Lys80–Gln100 the chain is on the extracellular side. A disulfide bond links Cys97 and Cys189. A helical membrane pass occupies residues Leu101 to Tyr120. Residues Asp121–Leu140 are Cytoplasmic-facing. Residues Cys141–Leu158 traverse the membrane as a helical segment. Residues Leu159–His196 are Extracellular-facing. A helical transmembrane segment spans residues Thr197–Arg220. The Cytoplasmic segment spans residues Ile221–Ala237. The helical transmembrane segment at Phe238–Leu260 threads the bilayer. Over Gln261 to Ser271 the chain is Extracellular. The helical transmembrane segment at Val272–Leu291 threads the bilayer. The Cytoplasmic portion of the chain corresponds to Arg292–Lys312.

The protein belongs to the G-protein coupled receptor 1 family.

It is found in the cell membrane. Its function is as follows. Odorant receptor. The chain is Olfactory receptor 1D5 (OR1D5) from Pan troglodytes (Chimpanzee).